A 233-amino-acid chain; its full sequence is Glucosamine-6-phosphate deaminase (233 aa).

The active-site Proton acceptor; for enolization step is Asp62. Residue Asn128 is the For ring-opening step of the active site. The Proton acceptor; for ring-opening step role is filled by His130. Glu135 acts as the For ring-opening step in catalysis.

It belongs to the glucosamine/galactosamine-6-phosphate isomerase family. NagB subfamily.

The catalysed reaction is alpha-D-glucosamine 6-phosphate + H2O = beta-D-fructose 6-phosphate + NH4(+). The protein operates within amino-sugar metabolism; N-acetylneuraminate degradation; D-fructose 6-phosphate from N-acetylneuraminate: step 5/5. Its function is as follows. Catalyzes the reversible isomerization-deamination of glucosamine 6-phosphate (GlcN6P) to form fructose 6-phosphate (Fru6P) and ammonium ion. The sequence is that of Glucosamine-6-phosphate deaminase from Streptococcus pneumoniae serotype 4 (strain ATCC BAA-334 / TIGR4).